Consider the following 239-residue polypeptide: MINNVISPEFDENGRALRRVRSFVRRQGRLTNRQQQALDNLWPKIGVEYQAEKLELGALFGREAPVVLEIGFGMGASLVTMASQNPEKDFLGIEVHVPGVGACLASAEDENIGNLRVMCHDAIEVLENMIPDNRLEMVQLFFPDPWHKVRHNKRRIVQPPFAELIKSKLKVGGVFHMATDWQPYAEHMLEVMNGVDNYLNLSENGDYVPRPSSRPITKFELRGQRLGHGVWDIMFKRIK.

The S-adenosyl-L-methionine site is built by Glu-69, Glu-94, Asp-121, and Asp-144. Residue Asp-144 is part of the active site. Lys-148 lines the substrate pocket. The interaction with RNA stretch occupies residues 150–155 (RHNKRR). Residues Asp-180 and 217–220 (TKFE) each bind substrate.

It belongs to the class I-like SAM-binding methyltransferase superfamily. TrmB family. In terms of assembly, monomer.

It catalyses the reaction guanosine(46) in tRNA + S-adenosyl-L-methionine = N(7)-methylguanosine(46) in tRNA + S-adenosyl-L-homocysteine. It functions in the pathway tRNA modification; N(7)-methylguanine-tRNA biosynthesis. Functionally, catalyzes the formation of N(7)-methylguanine at position 46 (m7G46) in tRNA. This Photorhabdus laumondii subsp. laumondii (strain DSM 15139 / CIP 105565 / TT01) (Photorhabdus luminescens subsp. laumondii) protein is tRNA (guanine-N(7)-)-methyltransferase.